We begin with the raw amino-acid sequence, 356 residues long: 5-formaminoimidazole-4-carboxamide-1-(beta)-D-ribofuranosyl 5'-monophosphate synthetase (356 aa).

5-amino-1-(5-phospho-beta-D-ribosyl)imidazole-4-carboxamide contacts are provided by His27 and Ser94. The ATP-grasp domain occupies 116–333 (RCLAWESDRE…YSDLIEKGLS (218 aa)). ATP-binding positions include 145 to 196 (AELI…TRYY) and Glu226. Asn255 contacts 5-amino-1-(5-phospho-beta-D-ribosyl)imidazole-4-carboxamide. Mg(2+)-binding residues include Glu293 and Glu306.

Belongs to the phosphohexose mutase family. Mg(2+) is required as a cofactor. Requires Mn(2+) as cofactor.

It carries out the reaction 5-amino-1-(5-phospho-beta-D-ribosyl)imidazole-4-carboxamide + formate + ATP = 5-formamido-1-(5-phospho-D-ribosyl)imidazole-4-carboxamide + ADP + phosphate. It participates in purine metabolism; IMP biosynthesis via de novo pathway; 5-formamido-1-(5-phospho-D-ribosyl)imidazole-4-carboxamide from 5-amino-1-(5-phospho-D-ribosyl)imidazole-4-carboxamide (formate route): step 1/1. Functionally, catalyzes the ATP- and formate-dependent formylation of 5-aminoimidazole-4-carboxamide-1-beta-d-ribofuranosyl 5'-monophosphate (AICAR) to 5-formaminoimidazole-4-carboxamide-1-beta-d-ribofuranosyl 5'-monophosphate (FAICAR) in the absence of folates. This chain is 5-formaminoimidazole-4-carboxamide-1-(beta)-D-ribofuranosyl 5'-monophosphate synthetase, found in Methanothrix thermoacetophila (strain DSM 6194 / JCM 14653 / NBRC 101360 / PT) (Methanosaeta thermophila).